Here is a 253-residue protein sequence, read N- to C-terminus: UPF0174 protein jhp_1494 (253 aa).

The protein belongs to the UPF0174 family.

The polypeptide is UPF0174 protein jhp_1494 (Helicobacter pylori (strain J99 / ATCC 700824) (Campylobacter pylori J99)).